The sequence spans 367 residues: Phosphoribosylaminoimidazole-succinocarboxamide synthase (367 aa).

Belongs to the SAICAR synthetase family.

It catalyses the reaction 5-amino-1-(5-phospho-D-ribosyl)imidazole-4-carboxylate + L-aspartate + ATP = (2S)-2-[5-amino-1-(5-phospho-beta-D-ribosyl)imidazole-4-carboxamido]succinate + ADP + phosphate + 2 H(+). The protein operates within purine metabolism; IMP biosynthesis via de novo pathway; 5-amino-1-(5-phospho-D-ribosyl)imidazole-4-carboxamide from 5-amino-1-(5-phospho-D-ribosyl)imidazole-4-carboxylate: step 1/2. In Vibrio parahaemolyticus serotype O3:K6 (strain RIMD 2210633), this protein is Phosphoribosylaminoimidazole-succinocarboxamide synthase.